A 73-amino-acid polypeptide reads, in one-letter code: uncharacterized protein (73 aa).

Belongs to the ycf40 family.

The protein localises to the plastid. It localises to the chloroplast. This is an uncharacterized protein from Trieres chinensis (Marine centric diatom).